Reading from the N-terminus, the 544-residue chain is Cannabidiolic acid synthase (544 aa).

Residues 1–28 (MKCSTFSFWFVCKIIFFFFSFNIQTSIA) form the signal peptide. Cys37 and Cys99 form a disulfide bridge. N-linked (GlcNAc...) asparagine glycosylation is found at Asn45 and Asn65. The region spanning 77–251 (TTPKPLVIVT…VAWKIRLVAV (175 aa)) is the FAD-binding PCMH-type domain. Residues 109–115 (TRSGGHD) and Ser120 contribute to the FAD site. A cross-link (6-(S-cysteinyl)-8alpha-(pros-histidyl)-FAD (His-Cys)) is located at residues 114–176 (HDSEGMSYIS…ENLSLAAGYC (63 aa)). A glycan (N-linked (GlcNAc...) asparagine) is linked at Asn168. Residues Cys176, 180–184 (CAGGH), Tyr190, Glu236, and Ile241 contribute to the FAD site. Cannabigerolate is bound at residue His291. Asn296, Asn304, and Asn328 each carry an N-linked (GlcNAc...) asparagine glycan. 2 residues coordinate cannabigerolate: Tyr416 and Glu441. 480–482 (YLN) contributes to the FAD binding site. Tyr483 functions as the Proton acceptor in the catalytic mechanism. Residue Asn498 is glycosylated (N-linked (GlcNAc...) asparagine).

The protein belongs to the oxygen-dependent FAD-linked oxidoreductase family. Monomer. It depends on FAD as a cofactor. Post-translationally, glycosylated. In terms of processing, the FAD cofactor is bound via a bicovalent 6-S-cysteinyl, 8alpha-N1-histidyl FAD linkage. Expressed in young leaves.

The protein localises to the secreted. It localises to the extracellular space. Its subcellular location is the apoplast. The enzyme catalyses cannabigerolate + O2 = cannabidiolate + H2O2. It functions in the pathway secondary metabolite biosynthesis; terpenoid biosynthesis. Its activity is regulated as follows. Inhibited by Hg(2+). Functionally, oxidoreductase involved in the biosynthesis of cannabinoids-related terpenophenolic natural products, which have pharmacological activity. Catalyzes the stereoselective oxidative cyclization of the monoterpene moiety in cannabigerolic acid (CBGA), producing cannabidiolate (CBDA), the major cannabioid in fiber-type Cannabis plants. Can also use cannabinerolic acid as substrate, but not cannabigerol or cannabinerol. This chain is Cannabidiolic acid synthase, found in Cannabis sativa (Hemp).